Consider the following 113-residue polypeptide: Type III endosome membrane protein TEMP (113 aa).

Residues 1 to 22 (MNETNKTLVGPSELPTASAVAP) are disordered. At 1-29 (MNETNKTLVGPSELPTASAVAPGPGTGAR) the chain is on the extracellular side. N-linked (GlcNAc...) asparagine glycosylation occurs at Asn-5. A helical; Signal-anchor for type III membrane protein membrane pass occupies residues 30–50 (AWPVLVGFVLGAVVLSLLIAL). Residues 51 to 113 (AAKCHLCRRY…TEGSRDHFSL (63 aa)) are Cytoplasmic-facing. The segment at 66–113 (HRPLPETGRGGRPQVAEDEDDDGFIEDNYIQPGTGELGTEGSRDHFSL) is disordered. The span at 81–90 (AEDEDDDGFI) shows a compositional bias: acidic residues.

It localises to the membrane. The protein localises to the early endosome. It is found in the recycling endosome. The protein resides in the cell membrane. May be involved in membrane trafficking between endosomes and plasma membrane. In Homo sapiens (Human), this protein is Type III endosome membrane protein TEMP (C1orf210).